The primary structure comprises 204 residues: Phosphatidylserine decarboxylase proenzyme (204 aa).

Serine 169 serves as the catalytic Schiff-base intermediate with substrate; via pyruvic acid. At serine 169 the chain carries Pyruvic acid (Ser); by autocatalysis.

This sequence belongs to the phosphatidylserine decarboxylase family. PSD-A subfamily. As to quaternary structure, heterodimer of a large membrane-associated beta subunit and a small pyruvoyl-containing alpha subunit. The cofactor is pyruvate. Post-translationally, is synthesized initially as an inactive proenzyme. Formation of the active enzyme involves a self-maturation process in which the active site pyruvoyl group is generated from an internal serine residue via an autocatalytic post-translational modification. Two non-identical subunits are generated from the proenzyme in this reaction, and the pyruvate is formed at the N-terminus of the alpha chain, which is derived from the carboxyl end of the proenzyme. The post-translation cleavage follows an unusual pathway, termed non-hydrolytic serinolysis, in which the side chain hydroxyl group of the serine supplies its oxygen atom to form the C-terminus of the beta chain, while the remainder of the serine residue undergoes an oxidative deamination to produce ammonia and the pyruvoyl prosthetic group on the alpha chain.

The protein localises to the cell membrane. It catalyses the reaction a 1,2-diacyl-sn-glycero-3-phospho-L-serine + H(+) = a 1,2-diacyl-sn-glycero-3-phosphoethanolamine + CO2. The protein operates within phospholipid metabolism; phosphatidylethanolamine biosynthesis; phosphatidylethanolamine from CDP-diacylglycerol: step 2/2. Catalyzes the formation of phosphatidylethanolamine (PtdEtn) from phosphatidylserine (PtdSer). This Solibacter usitatus (strain Ellin6076) protein is Phosphatidylserine decarboxylase proenzyme.